The sequence spans 212 residues: Kynurenine formamidase (212 aa).

W18 contacts substrate. 3 residues coordinate Zn(2+): H48, H52, and D54. Catalysis depends on H58, which acts as the Proton donor/acceptor. Residues H160 and E172 each coordinate Zn(2+).

This sequence belongs to the Cyclase 1 superfamily. KynB family. Homodimer. Zn(2+) is required as a cofactor.

The catalysed reaction is N-formyl-L-kynurenine + H2O = L-kynurenine + formate + H(+). The protein operates within amino-acid degradation; L-tryptophan degradation via kynurenine pathway; L-kynurenine from L-tryptophan: step 2/2. Its function is as follows. Catalyzes the hydrolysis of N-formyl-L-kynurenine to L-kynurenine, the second step in the kynurenine pathway of tryptophan degradation. This chain is Kynurenine formamidase, found in Paraburkholderia xenovorans (strain LB400).